The following is a 622-amino-acid chain: Presenilin-A (622 aa).

Over residues 1 to 16 (MKENEDEINKTDEKYK) the composition is skewed to basic and acidic residues. Disordered stretches follow at residues 1-65 (MKEN…NLEN) and 132-160 (VSEQNSDECGSKVDKDLDEDDDDDDDETE). Residues 1–168 (MKENEDEINK…TEVPELVDYS (168 aa)) lie on the Cytoplasmic side of the membrane. The segment covering 21–62 (SNNGNNKNKNNNNNNNNNNNNNNNNNNNNNNNNNNNNNGNSN) has biased composition (low complexity). Residues 147-160 (DLDEDDDDDDDETE) show a composition bias toward acidic residues. Residues 169 to 189 (EMIVSILYPVCITMVIVVLAI) traverse the membrane as a helical segment. The Lumenal portion of the chain corresponds to 190–227 (RAISSSTSKNSQIVEISNDNSGGNGDSSSGADKMVFDS). The chain crosses the membrane as a helical span at residues 228 to 248 (VVNSLIFLAVIILSTTIMVVL). The Cytoplasmic portion of the chain corresponds to 249–265 (YKFKLMKALYAWLMGTS). A helical membrane pass occupies residues 266–286 (ILLLGVFGGFLFLILLAYLNL). Residues 287–289 (GLD) lie on the Lumenal side of the membrane. The chain crosses the membrane as a helical span at residues 290–310 (YVTFVIVVWNFSVGGIVCIFW). Tyr-311 is a topological domain (cytoplasmic). The chain crosses the membrane as a helical span at residues 312-332 (SPKLLNQGYLISISVLMALFF). Residues 333-341 (SRLPDWTTW) lie on the Lumenal side of the membrane. Residues 342–362 (GILSIVSIYDIFAVLCPGGPL) form a helical membrane-spanning segment. Asp-351 is a catalytic residue. Topologically, residues 363–538 (RILIETAQKR…SYVKPKQSIR (176 aa)) are cytoplasmic. Residues 419-477 (NNNNNEDENKNNTEDGNNNNNKNKNNNNNNNNRIENENGAENSSENGSITPPPTIPNFI) are disordered. Residues 432-466 (EDGNNNNNKNKNNNNNNNNRIENENGAENSSENGS) show a composition bias toward low complexity. Residues 539–559 (LGLGDFVFYSVLIGKAASYQI) traverse the membrane as a helical segment. Residue Asp-543 is part of the active site. Topologically, residues 560–562 (TTV) are lumenal. The helical transmembrane segment at 563-583 (FTVFIAIITGLFLTLILLAVF) threads the bilayer. Over 584-588 (RRALP) the chain is Cytoplasmic. A PAL motif is present at residues 588–590 (PAL). The segment at residues 589–609 (ALPMSIIFGIIVFFLTFKILI) is an intramembrane region (helical). Residues 610–622 (QYIYFLGENQIFV) lie on the Cytoplasmic side of the membrane.

This sequence belongs to the peptidase A22A family. In terms of assembly, homodimer. Component of the gamma-secretase complex, a complex composed of a presenilin homodimer, nicastrin, aph1 and pen2.

The protein resides in the endoplasmic reticulum membrane. The protein localises to the golgi apparatus membrane. Its function is as follows. Probable catalytic subunit of the gamma-secretase complex, an endoprotease complex that catalyzes the intramembrane cleavage of integral membrane proteins such as Notch receptors. Requires the other members of the gamma-secretase complex to have a protease activity. This is Presenilin-A (psenA) from Dictyostelium discoideum (Social amoeba).